Reading from the N-terminus, the 250-residue chain is Ubiquinone/menaquinone biosynthesis C-methyltransferase UbiE (250 aa).

S-adenosyl-L-methionine is bound by residues T74, D94, 122–123 (DA), and S139.

Belongs to the class I-like SAM-binding methyltransferase superfamily. MenG/UbiE family.

The catalysed reaction is a 2-demethylmenaquinol + S-adenosyl-L-methionine = a menaquinol + S-adenosyl-L-homocysteine + H(+). It carries out the reaction a 2-methoxy-6-(all-trans-polyprenyl)benzene-1,4-diol + S-adenosyl-L-methionine = a 5-methoxy-2-methyl-3-(all-trans-polyprenyl)benzene-1,4-diol + S-adenosyl-L-homocysteine + H(+). The protein operates within quinol/quinone metabolism; menaquinone biosynthesis; menaquinol from 1,4-dihydroxy-2-naphthoate: step 2/2. It participates in cofactor biosynthesis; ubiquinone biosynthesis. Its function is as follows. Methyltransferase required for the conversion of demethylmenaquinol (DMKH2) to menaquinol (MKH2) and the conversion of 2-polyprenyl-6-methoxy-1,4-benzoquinol (DDMQH2) to 2-polyprenyl-3-methyl-6-methoxy-1,4-benzoquinol (DMQH2). This is Ubiquinone/menaquinone biosynthesis C-methyltransferase UbiE from Paracoccus denitrificans (strain Pd 1222).